The chain runs to 260 residues: Small ribosomal subunit protein uS3 (260 aa).

Residues 39 to 114 (LRQYIEQKLG…QIRINVVEVQ (76 aa)) enclose the KH type-2 domain. Residues 217 to 260 (GQEPDPLPPASRDRERDPRDRDREPRRRQQQRRRQQFEDRSNEG) form a disordered region. Composition is skewed to basic and acidic residues over residues 227 to 243 (SRDR…EPRR) and 251 to 260 (QQFEDRSNEG).

This sequence belongs to the universal ribosomal protein uS3 family. Part of the 30S ribosomal subunit. Forms a tight complex with proteins S10 and S14.

Binds the lower part of the 30S subunit head. Binds mRNA in the 70S ribosome, positioning it for translation. The chain is Small ribosomal subunit protein uS3 from Nostoc punctiforme (strain ATCC 29133 / PCC 73102).